The chain runs to 1416 residues: Non-structural polyprotein 1AB (1416 aa).

A coiled-coil region spans residues 104-146; sequence KLIHKANALQERLRLSQEEKATLTLDVQFLQHENVRLKELISK. 5 helical membrane-spanning segments follow: residues 154–174, 239–259, 286–306, 313–333, and 344–364; these read MKWI…GGYA, VFYY…LAIG, VLPT…TLMV, LLAI…LCFM, and GLIA…LTGT. Catalysis depends on charge relay system; for serine protease activity residues histidine 461, aspartate 489, and serine 551. Positions 587 to 614 form a coiled coil; the sequence is VKAPSQVELLKEEIERLKAQLNSAAENP. Residue tyrosine 693 is modified to O-(5'-phospho-RNA)-tyrosine. Residues 752-815 are disordered; that stretch reads NFDQAKPTPA…DPQPYSQTYG (64 aa). Basic and acidic residues predominate over residues 783–795; that stretch reads SQKKDKQLEHEQQ. Residues 805–814 show a composition bias toward polar residues; the sequence is NDPQPYSQTY. Residues 1161-1287 enclose the RdRp catalytic domain; it reads KYFIEFDWTR…TTPSVPENYE (127 aa).

This sequence belongs to the astroviridae polyprotein 1AB family. As to quaternary structure, monomer. Post-translationally, cleaved by the viral and host proteases. The protease is probably autocatalytically cleaved.

The protein localises to the host membrane. The enzyme catalyses RNA(n) + a ribonucleoside 5'-triphosphate = RNA(n+1) + diphosphate. In terms of biological role, responsible for the cleavage of the polyprotein into functional products. Protein covalently attached to the 5' extremity of the genomic and subgenomic RNAs. It may serve as a primer for the replicase. This Homo sapiens (Human) protein is Non-structural polyprotein 1AB (ORF1).